The following is a 170-amino-acid chain: Peptide deformylase 2 (170 aa).

Positions 94 and 136 each coordinate Fe cation. The active site involves Glu-137. His-140 contacts Fe cation.

This sequence belongs to the polypeptide deformylase family. Fe(2+) serves as cofactor.

It carries out the reaction N-terminal N-formyl-L-methionyl-[peptide] + H2O = N-terminal L-methionyl-[peptide] + formate. Removes the formyl group from the N-terminal Met of newly synthesized proteins. Requires at least a dipeptide for an efficient rate of reaction. N-terminal L-methionine is a prerequisite for activity but the enzyme has broad specificity at other positions. The chain is Peptide deformylase 2 from Xanthomonas axonopodis pv. citri (strain 306).